A 385-amino-acid chain; its full sequence is Succinate--CoA ligase [ADP-forming] subunit beta (385 aa).

The 236-residue stretch at 9-244 (KEILRKYGVP…QDEEDPLETR (236 aa)) folds into the ATP-grasp domain. ATP is bound by residues Lys-46, 53–55 (GRG), Glu-99, Cys-102, and Glu-107. Residues Asn-199 and Asp-213 each contribute to the Mg(2+) site. Substrate is bound by residues Asn-264 and 321–323 (GIM).

This sequence belongs to the succinate/malate CoA ligase beta subunit family. In terms of assembly, heterotetramer of two alpha and two beta subunits. Mg(2+) serves as cofactor.

The enzyme catalyses succinate + ATP + CoA = succinyl-CoA + ADP + phosphate. It catalyses the reaction GTP + succinate + CoA = succinyl-CoA + GDP + phosphate. Its pathway is carbohydrate metabolism; tricarboxylic acid cycle; succinate from succinyl-CoA (ligase route): step 1/1. Functionally, succinyl-CoA synthetase functions in the citric acid cycle (TCA), coupling the hydrolysis of succinyl-CoA to the synthesis of either ATP or GTP and thus represents the only step of substrate-level phosphorylation in the TCA. The beta subunit provides nucleotide specificity of the enzyme and binds the substrate succinate, while the binding sites for coenzyme A and phosphate are found in the alpha subunit. This chain is Succinate--CoA ligase [ADP-forming] subunit beta, found in Rickettsia bellii (strain OSU 85-389).